We begin with the raw amino-acid sequence, 1690 residues long: Trinucleotide repeat-containing gene 6C protein (1690 aa).

Composition is skewed to polar residues over residues 1-12, 19-36, and 160-183; these read MATGSAQSSFPS, GSHGTNGALVQSPSNQSA, and AEPQTSTSQNVSFSVQPQNLNTDG. Disordered stretches follow at residues 1 to 42, 158 to 202, 226 to 848, and 863 to 928; these read MATG…AGGT, ESAE…AMQT, PGAN…EPVV, and CKPA…TPGK. The sufficient for interaction with argonaute family proteins stretch occupies residues 1-921; the sequence is MATGSAQSSF…GNTSKKGLQK (921 aa). Over residues 184–198 the composition is skewed to low complexity; sequence PNNTNPMNSSPNPIN. The segment covering 255-288 has biased composition (polar residues); sequence NPATGSTNCGFSQGNGDTVNSALSAKQNGSSSAV. An Omega-N-methylarginine modification is found at Arg-313. A compositionally biased stretch (polar residues) spans 362–374; that stretch reads GWDSASAASQTPA. The segment covering 384–404 has biased composition (low complexity); that stretch reads SWAKATSSGTTASEGSSDGSG. The span at 415-426 shows a compositional bias: basic and acidic residues; the sequence is GTGEGRRRDKGV. Residues 444–459 show a composition bias toward polar residues; the sequence is LSNSGWGQTPVKQNTA. Positions 464 to 474 are enriched in basic and acidic residues; sequence ESPRSERKNDN. Ser-465 is modified (phosphoserine). Polar residues-rich tracts occupy residues 482 to 510, 519 to 530, 540 to 551, 644 to 656, and 663 to 678; these read IATQPSNSGGKTDGSIMNSTNTSSVSGWV, ANTSWGDSNNKA, SISSTAVNNAAA, GTNAKVNPGTNWG, and PQQNWAHKPQDNNVSN. Ser-714 carries the phosphoserine modification. Over residues 754-771 the composition is skewed to low complexity; sequence SSTTAPATPTTPTSSSTT. Thr-776 carries the phosphothreonine modification. The segment covering 778-788 has biased composition (polar residues); sequence PSHQAGTQLNR. The segment covering 901–915 has biased composition (low complexity); the sequence is SQESSSSCSSWGNTS. A UBA domain is found at 928–973; it reads KQDEAWIMSRLIKQLTDMGFPREPAEEALKSNSMNLDQAMSALLEK. A Phosphoserine modification is found at Ser-1006. Residues 1156–1214 adopt a coiled-coil conformation; it reads QLQLAYQRLQIQQQMLQAQRNVSGPMRQQEQQVARTITNLQQQIQQHQRQLAQALLVKQ. Disordered regions lie at residues 1212–1337, 1351–1380, 1397–1421, 1441–1486, and 1600–1625; these read VKQP…PPGK, QNSESPASPPVAVPHSWSRAKSDSDKISNG, GLQNIDPENDPDVTPGSVPTGPTIN, IKST…PSST, and PPTSSWQSSSGGSQPRLGTSGSTHGL. Positions 1214–1223 are enriched in pro residues; sequence QPPPPPPPPH. The interval 1260–1690 is silencing domain; interaction with CNOT1 and PAN3; it reads NTFAPYPLAG…PGDLLSGESI (431 aa). A compositionally biased stretch (polar residues) spans 1272-1321; the sequence is PNMNVNSIDMSSGLSVKDPSQSQSRLPQWTHPNSMGNLSSAASPLDQNPS. Residues 1371–1417 are required for interaction with PABPC1; that stretch reads KSDSDKISNGSSISWPPEFHPGVPWKGLQNIDPENDPDVTPGSVPTG. The sufficient for translational repression when tethered to a target mRNA stretch occupies residues 1371 to 1690; sequence KSDSDKISNG…PGDLLSGESI (320 aa). The PABPC1-interacting motif-2 (PAM2) stretch occupies residues 1381 to 1399; that stretch reads SSISWPPEFHPGVPWKGLQ. The span at 1441 to 1457 shows a compositional bias: polar residues; the sequence is IKSTWSSGPASHTQASL. The RRM domain occupies 1565-1632; it reads AQKSLHMCVL…HGLVRSDTAH (68 aa). Residues 1596-1690 are interaction with the CCR4-NOT complex; sequence GQALPPTSSW…PGDLLSGESI (95 aa). Over residues 1603–1613 the composition is skewed to low complexity; sequence SSWQSSSGGSQ.

This sequence belongs to the GW182 family. Interacts with one or more of the argonaute family proteins AGO1, AGO2, AGO3 and AGO4. Interacts with CNOT1; the interaction mediates the association with the CCR4-NOT complex. Interacts with PAN3; the interaction mediates the association with the PAN complex.

Functionally, plays a role in RNA-mediated gene silencing by micro-RNAs (miRNAs). Required for miRNA-dependent translational repression of complementary mRNAs by argonaute family proteins As scaffoldng protein associates with argonaute proteins bound to partially complementary mRNAs and simultaneously can recruit CCR4-NOT and PAN deadenylase complexes. In Mus musculus (Mouse), this protein is Trinucleotide repeat-containing gene 6C protein (Tnrc6c).